A 348-amino-acid polypeptide reads, in one-letter code: NADH-quinone oxidoreductase subunit H (348 aa).

Transmembrane regions (helical) follow at residues 10-30 (LPFL…LVLV), 82-102 (GVFL…WAVI), 115-135 (VGLL…IMGG), 161-181 (IGFV…TTIV), 199-219 (FLDW…ISAL), 251-271 (LFFL…TILF), 287-307 (IPGV…FAIV), and 322-342 (LGWK…AAFL).

This sequence belongs to the complex I subunit 1 family. As to quaternary structure, NDH-1 is composed of 14 different subunits. Subunits NuoA, H, J, K, L, M, N constitute the membrane sector of the complex.

It localises to the cell inner membrane. The enzyme catalyses a quinone + NADH + 5 H(+)(in) = a quinol + NAD(+) + 4 H(+)(out). Its function is as follows. NDH-1 shuttles electrons from NADH, via FMN and iron-sulfur (Fe-S) centers, to quinones in the respiratory chain. The immediate electron acceptor for the enzyme in this species is believed to be ubiquinone. Couples the redox reaction to proton translocation (for every two electrons transferred, four hydrogen ions are translocated across the cytoplasmic membrane), and thus conserves the redox energy in a proton gradient. This subunit may bind ubiquinone. The polypeptide is NADH-quinone oxidoreductase subunit H (Bartonella tribocorum (strain CIP 105476 / IBS 506)).